A 387-amino-acid chain; its full sequence is Erythronate-4-phosphate dehydrogenase (387 aa).

2 residues coordinate substrate: S45 and T67. NAD(+) is bound at residue D147. R208 is a catalytic residue. Residue D232 participates in NAD(+) binding. E237 is a catalytic residue. The active-site Proton donor is H254. Residue G257 participates in NAD(+) binding. Residue Y258 coordinates substrate.

Belongs to the D-isomer specific 2-hydroxyacid dehydrogenase family. PdxB subfamily. As to quaternary structure, homodimer.

Its subcellular location is the cytoplasm. It catalyses the reaction 4-phospho-D-erythronate + NAD(+) = (R)-3-hydroxy-2-oxo-4-phosphooxybutanoate + NADH + H(+). The protein operates within cofactor biosynthesis; pyridoxine 5'-phosphate biosynthesis; pyridoxine 5'-phosphate from D-erythrose 4-phosphate: step 2/5. Catalyzes the oxidation of erythronate-4-phosphate to 3-hydroxy-2-oxo-4-phosphonooxybutanoate. This chain is Erythronate-4-phosphate dehydrogenase, found in Shewanella woodyi (strain ATCC 51908 / MS32).